Reading from the N-terminus, the 347-residue chain is Methylthioribose-1-phosphate isomerase (347 aa).

Residues 45 to 47 (RGA), Arg-88, and Gln-197 each bind substrate. Residue Asp-238 is the Proton donor of the active site. 248–249 (NK) lines the substrate pocket.

The protein belongs to the eIF-2B alpha/beta/delta subunits family. MtnA subfamily.

The catalysed reaction is 5-(methylsulfanyl)-alpha-D-ribose 1-phosphate = 5-(methylsulfanyl)-D-ribulose 1-phosphate. Its pathway is amino-acid biosynthesis; L-methionine biosynthesis via salvage pathway; L-methionine from S-methyl-5-thio-alpha-D-ribose 1-phosphate: step 1/6. Catalyzes the interconversion of methylthioribose-1-phosphate (MTR-1-P) into methylthioribulose-1-phosphate (MTRu-1-P). The chain is Methylthioribose-1-phosphate isomerase from Nostoc sp. (strain PCC 7120 / SAG 25.82 / UTEX 2576).